Consider the following 520-residue polypeptide: GMP synthase [glutamine-hydrolyzing] (520 aa).

In terms of domain architecture, Glutamine amidotransferase type-1 spans Lys-13–Asp-205. Cys-90 functions as the Nucleophile in the catalytic mechanism. Catalysis depends on residues His-179 and Glu-181. Residues Trp-206–Arg-395 form the GMPS ATP-PPase domain. Residue Ser-233–Ser-239 coordinates ATP.

In terms of assembly, homodimer.

It carries out the reaction XMP + L-glutamine + ATP + H2O = GMP + L-glutamate + AMP + diphosphate + 2 H(+). It functions in the pathway purine metabolism; GMP biosynthesis; GMP from XMP (L-Gln route): step 1/1. In terms of biological role, catalyzes the synthesis of GMP from XMP. The protein is GMP synthase [glutamine-hydrolyzing] of Streptococcus pneumoniae (strain CGSP14).